Reading from the N-terminus, the 843-residue chain is Neuroligin-1 (843 aa).

Positions Met-1–Ser-45 are cleaved as a signal peptide. Residues Gln-46–Ser-697 are Extracellular-facing. A glycan (N-linked (GlcNAc...) (complex) asparagine) is linked at Asn-109. An intrachain disulfide couples Cys-117 to Cys-153. The tract at residues Leu-167–Gly-190 is disordered. Residues Leu-175–Ile-186 show a composition bias toward acidic residues. N-linked (GlcNAc...) (complex) asparagine glycans are attached at residues Asn-303 and Asn-343. 2 cysteine pairs are disulfide-bonded: Cys-342–Cys-353 and Cys-512–Cys-546. An N-linked (GlcNAc...) asparagine glycan is attached at Asn-547. Residues Thr-647–Asp-688 are disordered. A compositionally biased stretch (polar residues) spans Lys-661–Phe-670. 2 O-linked (GalNAc...) serine glycosylation sites follow: Ser-683 and Ser-686. The chain crosses the membrane as a helical span at residues Val-698–Tyr-718. The Cytoplasmic segment spans residues Tyr-719–Val-843. Residues Gly-822–Val-843 are disordered. The span at Pro-831 to Val-843 shows a compositional bias: basic residues.

The protein belongs to the type-B carboxylesterase/lipase family. In terms of assembly, interacts with neurexins NRXN1, NRXN2 and NRXN3. Interaction with neurexins is mediated by heparan sulfate glycan modification on neurexin. Interacts (via its C-terminus) with DLG4/PSD-95 (via PDZ domain 3). Interacts with AIP1, GOPC and PDZRN3. Interacts with NLGN3. As to expression, brain and arteries (at protein level). Expressed in olfactory bulb. Detected in brain.

The protein resides in the cell membrane. It is found in the postsynaptic density. It localises to the synaptic cleft. Its subcellular location is the synaptic cell membrane. Functionally, cell surface protein involved in cell-cell-interactions via its interactions with neurexin family members. Plays a role in synapse function and synaptic signal transmission, and probably mediates its effects by recruiting and clustering other synaptic proteins. May promote the initial formation of synapses, but is not essential for this. In vitro, triggers the de novo formation of presynaptic structures. May be involved in specification of excitatory synapses. Required to maintain wakefulness quality and normal synchrony of cerebral cortex activity during wakefulness and sleep. The protein is involved in nervous system development. The protein is Neuroligin-1 (Nlgn1) of Mus musculus (Mouse).